The following is a 433-amino-acid chain: KICSTOR complex protein ITFG2 (433 aa).

The stretch at 19–48 (FPHAICLGDVDNDTLNELVVGDTSGKVSVY) is one FG-GAP 1; atypical repeat. S104 is subject to Phosphoserine. One copy of the FG-GAP 2; atypical repeat lies at 126–155 (NTKVMLISDIDGDGCRELVVGYTDRVVRAF). S220 is subject to Phosphoserine.

In terms of assembly, part of the KICSTOR complex composed of KPTN, ITFG2, KICS2 and SZT2. SZT2 probably serves as a link between the other three proteins in the KICSTOR complex and may mediate the direct interaction with the GATOR complex via GATOR1. The KICSTOR complex interacts directly with the GATOR1 complex and most probably indirectly with the GATOR2 complex in an amino acid-independent manner.

It is found in the lysosome membrane. Functionally, as part of the KICSTOR complex functions in the amino acid-sensing branch of the TORC1 signaling pathway. Recruits, in an amino acid-independent manner, the GATOR1 complex to the lysosomal membranes and allows its interaction with GATOR2 and the RAG GTPases. Functions upstream of the RAG GTPases and is required to negatively regulate mTORC1 signaling in absence of amino acids. In absence of the KICSTOR complex mTORC1 is constitutively localized to the lysosome and activated. The KICSTOR complex is also probably involved in the regulation of mTORC1 by glucose. This chain is KICSTOR complex protein ITFG2, found in Pongo abelii (Sumatran orangutan).